The primary structure comprises 115 residues: MSDLDIQIPTAFDPFAEANAGDSGAAAGSKDYVHVRIQQRNGRKSLTTVQGLKKEFSYSKILKDLKKEFCCNGTVVQDPELGQVIQLQGDQRKNVSNFLVQAGIVKKEHIKIHGF.

This sequence belongs to the SUI1 family.

In terms of biological role, probably involved in translation. This chain is Protein translation factor SUI1 homolog (TIF), found in Zea mays (Maize).